We begin with the raw amino-acid sequence, 78 residues long: Exodeoxyribonuclease 7 small subunit (78 aa).

This sequence belongs to the XseB family. As to quaternary structure, heterooligomer composed of large and small subunits.

Its subcellular location is the cytoplasm. The enzyme catalyses Exonucleolytic cleavage in either 5'- to 3'- or 3'- to 5'-direction to yield nucleoside 5'-phosphates.. Bidirectionally degrades single-stranded DNA into large acid-insoluble oligonucleotides, which are then degraded further into small acid-soluble oligonucleotides. The protein is Exodeoxyribonuclease 7 small subunit of Psychromonas ingrahamii (strain DSM 17664 / CCUG 51855 / 37).